The primary structure comprises 178 residues: Large ribosomal subunit protein uL5 (178 aa).

The protein belongs to the universal ribosomal protein uL5 family. As to quaternary structure, part of the 50S ribosomal subunit; contacts the 5S rRNA and probably tRNA. Forms a bridge to the 30S subunit in the 70S ribosome.

Functionally, this is one of the proteins that bind and probably mediate the attachment of the 5S RNA into the large ribosomal subunit, where it forms part of the central protuberance. In the 70S ribosome it contacts protein S13 of the 30S subunit (bridge B1b), connecting the 2 subunits; this bridge is implicated in subunit movement. May contact the P site tRNA; the 5S rRNA and some of its associated proteins might help stabilize positioning of ribosome-bound tRNAs. In Sulfolobus acidocaldarius (strain ATCC 33909 / DSM 639 / JCM 8929 / NBRC 15157 / NCIMB 11770), this protein is Large ribosomal subunit protein uL5.